Consider the following 157-residue polypeptide: Pyruvoyl-dependent arginine decarboxylase 1 (157 aa).

Ser41 bears the Pyruvic acid (Ser) mark.

Belongs to the PdaD family. It depends on pyruvate as a cofactor.

It carries out the reaction L-arginine + H(+) = agmatine + CO2. This is Pyruvoyl-dependent arginine decarboxylase 1 (pdaD1) from Archaeoglobus fulgidus (strain ATCC 49558 / DSM 4304 / JCM 9628 / NBRC 100126 / VC-16).